Reading from the N-terminus, the 78-residue chain is Large ribosomal subunit protein bL28 (78 aa).

The disordered stretch occupies residues 1-22 (MSRVCQVTGKRPMSGNNRSHAM).

This sequence belongs to the bacterial ribosomal protein bL28 family.

In Yersinia pseudotuberculosis serotype O:1b (strain IP 31758), this protein is Large ribosomal subunit protein bL28.